The chain runs to 317 residues: Non-structural protein 2 (317 aa).

ATP is bound by residues 107–109, K188, and 221–223; these read SVR and HGK. The interval 205-241 is RNA-binding; that stretch reads LVAELRWQYNRFAVITHGKGHYRVVKYSSVANHADRV. Residue H225 is the For NTPase and RTPase activities of the active site. R227 contributes to the ATP binding site.

This sequence belongs to the rotavirus NSP2 family. Homooctamer. Interacts with VP1; this interaction is weak. Interacts with NSP5; this interaction leads to up-regulation of NSP5 phosphorylation and formation of viral factories. Interacts with host DCP1A, DCP1B, DDX6, EDC4 and EIF2S1/eIF2-alpha; these interactions are probably part of the sequestration of some host SGs and PBs proteins in viral factories. Requires Mg(2+) as cofactor.

It is found in the host cytoplasm. Participates in replication and packaging of the viral genome. Plays a crucial role, together with NSP5, in the formation of virus factories (viroplasms), which are large inclusions in the host cytoplasm where replication intermediates are assembled and viral RNA replication takes place. Displays ssRNA binding, NTPase, RNA triphosphatase (RTPase) and ATP-independent helix-unwinding activities. The unwinding activity may prepare and organize plus-strand RNAs for packaging and replication by removing interfering secondary structures. The RTPase activity plays a role in the removal of the gamma-phosphate from the rotavirus RNA minus strands of dsRNA genome segments. Participates in the selective exclusion of host proteins from stress granules (SG) and P bodies (PB). Also participates in the sequestration of these remodeled organelles in viral factories. The polypeptide is Non-structural protein 2 (Homo sapiens (Human)).